Consider the following 433-residue polypeptide: Actin-related protein 4 (433 aa).

Residues 289 to 317 are disordered; that stretch reads GSDEEMNEEPSKPIEQTENNEVSQQDSSV. Residues 302 to 317 are compositionally biased toward polar residues; it reads IEQTENNEVSQQDSSV.

This sequence belongs to the actin family. ARP4 subfamily. As to quaternary structure, component of the NuA4 histone acetyltransferase complex, of the INO80 chromatin remodeling complex, and of the SWR1 chromatin remodeling complex.

The protein resides in the nucleus. Functionally, chromatin interaction component of the NuA4 histone acetyltransferase complex which is involved in transcriptional activation of selected genes principally by acetylation of nucleosomal histone H4 and H2A. The NuA4 complex is also involved in DNA repair. Is required for NuA4 complex integrity. Component of the SWR1 complex which mediates the ATP-dependent exchange of histone H2A for the H2A variant HZT1 leading to transcriptional regulation of selected genes by chromatin remodeling. Component of the INO80 complex which remodels chromatin by shifting nucleosomes and is involved in DNA repair. This is Actin-related protein 4 (alp5) from Schizosaccharomyces pombe (strain 972 / ATCC 24843) (Fission yeast).